The following is a 92-amino-acid chain: uncharacterized protein (92 aa).

This is an uncharacterized protein from Sulfolobus spindle-shape virus 1 (SSV1).